The chain runs to 284 residues: Diaminopimelate epimerase (284 aa).

Substrate contacts are provided by Asn14 and Asn67. Residue Cys76 is the Proton donor of the active site. Substrate contacts are provided by residues 77–78 (GN), Asn166, Asn199, and 217–218 (ER). The Proton acceptor role is filled by Cys226. Position 227–228 (227–228 (GT)) interacts with substrate.

This sequence belongs to the diaminopimelate epimerase family. Homodimer.

Its subcellular location is the cytoplasm. The catalysed reaction is (2S,6S)-2,6-diaminopimelate = meso-2,6-diaminopimelate. The protein operates within amino-acid biosynthesis; L-lysine biosynthesis via DAP pathway; DL-2,6-diaminopimelate from LL-2,6-diaminopimelate: step 1/1. Functionally, catalyzes the stereoinversion of LL-2,6-diaminopimelate (L,L-DAP) to meso-diaminopimelate (meso-DAP), a precursor of L-lysine and an essential component of the bacterial peptidoglycan. The polypeptide is Diaminopimelate epimerase (Bacillus pumilus (strain SAFR-032)).